Consider the following 118-residue polypeptide: Large ribosomal subunit protein uL24 (118 aa).

Belongs to the universal ribosomal protein uL24 family. As to quaternary structure, part of the 50S ribosomal subunit.

Its function is as follows. One of two assembly initiator proteins, it binds directly to the 5'-end of the 23S rRNA, where it nucleates assembly of the 50S subunit. Functionally, one of the proteins that surrounds the polypeptide exit tunnel on the outside of the subunit. The sequence is that of Large ribosomal subunit protein uL24 from Synechococcus sp. (strain CC9902).